The following is a 293-amino-acid chain: Ribosomal protein L11 methyltransferase (293 aa).

S-adenosyl-L-methionine contacts are provided by threonine 145, glycine 166, aspartate 188, and asparagine 230.

This sequence belongs to the methyltransferase superfamily. PrmA family.

It localises to the cytoplasm. The catalysed reaction is L-lysyl-[protein] + 3 S-adenosyl-L-methionine = N(6),N(6),N(6)-trimethyl-L-lysyl-[protein] + 3 S-adenosyl-L-homocysteine + 3 H(+). Functionally, methylates ribosomal protein L11. In Shewanella woodyi (strain ATCC 51908 / MS32), this protein is Ribosomal protein L11 methyltransferase.